A 119-amino-acid chain; its full sequence is Ribonuclease P protein component (119 aa).

The protein belongs to the RnpA family. Consists of a catalytic RNA component (M1 or rnpB) and a protein subunit.

The catalysed reaction is Endonucleolytic cleavage of RNA, removing 5'-extranucleotides from tRNA precursor.. RNaseP catalyzes the removal of the 5'-leader sequence from pre-tRNA to produce the mature 5'-terminus. It can also cleave other RNA substrates such as 4.5S RNA. The protein component plays an auxiliary but essential role in vivo by binding to the 5'-leader sequence and broadening the substrate specificity of the ribozyme. This is Ribonuclease P protein component from Bacillus pumilus (strain SAFR-032).